The sequence spans 261 residues: Putative ankyrin repeat protein L99 (261 aa).

ANK repeat units lie at residues 21–50, 51–80, 81–110, 112–140, 142–170, 171–203, and 231–259; these read KVNP…DVHA, HEDY…NIHS, DRDL…NVNA, QNSA…NIHA, NNFC…DINA, DNGA…IDNC, and NELK…NINS.

This is Putative ankyrin repeat protein L99 from Acanthamoeba polyphaga (Amoeba).